The following is a 267-amino-acid chain: Phosphonates import ATP-binding protein PhnC 1 (267 aa).

An ABC transporter domain is found at Leu3–Gln247. Residue Gly36 to Thr43 coordinates ATP.

Belongs to the ABC transporter superfamily. Phosphonates importer (TC 3.A.1.9.1) family. The complex is composed of two ATP-binding proteins (PhnC), two transmembrane proteins (PhnE) and a solute-binding protein (PhnD).

Its subcellular location is the cell inner membrane. It carries out the reaction phosphonate(out) + ATP + H2O = phosphonate(in) + ADP + phosphate + H(+). Part of the ABC transporter complex PhnCDE involved in phosphonates import. Responsible for energy coupling to the transport system. The polypeptide is Phosphonates import ATP-binding protein PhnC 1 (Pseudomonas aeruginosa (strain ATCC 15692 / DSM 22644 / CIP 104116 / JCM 14847 / LMG 12228 / 1C / PRS 101 / PAO1)).